The following is a 228-amino-acid chain: MLSSNPMTWKLSHMVVPGKNSTISPDYFTASQTSPLDMMKFPSPGSSKRYDNGGGIGLGIVAALEKSSIGINPVCHTGAGSKGFDLARYSKRFQFAAGIDLSDSEEYTCVTTRDGLTKVYYKEEEFEFGHNLLNGDQRWRKPIEIAEESPAKERRVLRDCPDFLTSCCLCKKKLQGKDIYMYKGDEGFCSKECRSLKIMEDSLKEQHKLTSVEVLTGEEIASPGIFLI.

The FLZ-type zinc finger occupies 162 to 205 (DFLTSCCLCKKKLQGKDIYMYKGDEGFCSKECRSLKIMEDSLKE).

It belongs to the FLZ family. In terms of assembly, interacts with KIN10 and KIN11 via its FLZ-type zinc finger domain. Interacts with KINB1 and KINB2 via its N-terminal part. Forms homodimer and heterodimer with FLZ2 and FLZ10 in vitro.

May act as an adapter to facilitate the interaction of SnRK1 complex with effector proteins, conferring tissue- and stimulus-type specific differences in the SnRK1 regulation pathway. The polypeptide is FCS-Like Zinc finger 12 (Arabidopsis thaliana (Mouse-ear cress)).